The sequence spans 212 residues: Dephospho-CoA kinase (212 aa).

The DPCK domain occupies 8–212 (LVGVTGGLGS…QLLQQAMLRR (205 aa)). Position 16–21 (16–21 (GSGKSM)) interacts with ATP.

Belongs to the CoaE family.

The protein resides in the cytoplasm. The enzyme catalyses 3'-dephospho-CoA + ATP = ADP + CoA + H(+). Its pathway is cofactor biosynthesis; coenzyme A biosynthesis; CoA from (R)-pantothenate: step 5/5. Its function is as follows. Catalyzes the phosphorylation of the 3'-hydroxyl group of dephosphocoenzyme A to form coenzyme A. The chain is Dephospho-CoA kinase from Chlorobium chlorochromatii (strain CaD3).